Reading from the N-terminus, the 521-residue chain is MAKAATPKTTAAAEAKPAAKAPAKKAAPKTTAAAKPAATKSGAPKAAAAGAIGHITQVIGAVVDVKFPEGQLPLILNALEVDNQGHRLVLEVAQHLGEDTVRTIAMDATEGLVRGQEARDTGEPIMVPVGVETLGRIMNVIGEPVDEAGPIKTKATRAIHQNAPEYIEQSTEAEILVTGIKVVDLLAPYAKGGKIGLFGGAGVGKTVLIMELINNVAKAHGGYSVFAGVGERTREGNDLYHEMIESGVNKLGGGEGSKAALVYGQMNEPPGARARVALSGLTVAENFRDQGQDVLFFVDNIFRFTQAGSEVSALLGRIPSAVGYQPTLATDMGAMQERITTTTKGSITSVQAIYVPADDLTDPAPATSFAHLDATTVLSRSIAEKGIYPAVDPLDSTSRMLDPKVVGEEHYAVARQVQSILQRYKALQDIIAILGMDELSEEDKLTVARARKIERFLSQPFFVAEVFTGSPGKLVDLADTIKGFKGLCAGDYDHLPEAAFYMVGSIEEALEKAKKLAAEAA.

Composition is skewed to low complexity over residues 1 to 21 (MAKA…AAKA) and 28 to 42 (PKTT…TKSG). The interval 1–42 (MAKAATPKTTAAAEAKPAAKAPAKKAAPKTTAAAKPAATKSG) is disordered. Position 199 to 206 (199 to 206 (GGAGVGKT)) interacts with ATP.

It belongs to the ATPase alpha/beta chains family. As to quaternary structure, F-type ATPases have 2 components, CF(1) - the catalytic core - and CF(0) - the membrane proton channel. CF(1) has five subunits: alpha(3), beta(3), gamma(1), delta(1), epsilon(1). CF(0) has three main subunits: a(1), b(2) and c(9-12). The alpha and beta chains form an alternating ring which encloses part of the gamma chain. CF(1) is attached to CF(0) by a central stalk formed by the gamma and epsilon chains, while a peripheral stalk is formed by the delta and b chains.

The protein localises to the cell inner membrane. The enzyme catalyses ATP + H2O + 4 H(+)(in) = ADP + phosphate + 5 H(+)(out). Produces ATP from ADP in the presence of a proton gradient across the membrane. The catalytic sites are hosted primarily by the beta subunits. This is ATP synthase subunit beta from Brucella canis (strain ATCC 23365 / NCTC 10854 / RM-666).